Here is an 86-residue protein sequence, read N- to C-terminus: UPF0297 protein SERP1181 (86 aa).

It belongs to the UPF0297 family.

The chain is UPF0297 protein SERP1181 from Staphylococcus epidermidis (strain ATCC 35984 / DSM 28319 / BCRC 17069 / CCUG 31568 / BM 3577 / RP62A).